Reading from the N-terminus, the 701-residue chain is Kinesin-like protein KIN-10C (701 aa).

Residues 8 to 318 enclose the Kinesin motor domain; it reads VVRVVARVKP…LNLASRICLG (311 aa). 94–101 is a binding site for ATP; sequence GARNSGKT.

Belongs to the TRAFAC class myosin-kinesin ATPase superfamily. Kinesin family. KIN-10 subfamily.

The polypeptide is Kinesin-like protein KIN-10C (Arabidopsis thaliana (Mouse-ear cress)).